Consider the following 284-residue polypeptide: Quinate/shikimate dehydrogenase (NAD(+)) (284 aa).

Residues Ser18 and Thr70 each coordinate shikimate. Residues 18 to 20 and Thr70 contribute to the L-quinate site; that span reads SRT. The active-site Proton acceptor is the Tyr73. The shikimate site is built by Lys74, Asn95, and Asp111. Lys74, Asn95, and Asp111 together coordinate L-quinate. NAD(+) is bound by residues 137–138, Asp159, Arg164, 203–206, Ala214, Val229, and Gly252; these read GG and TPMG. Gln259 is a shikimate binding site. Gln259 contributes to the L-quinate binding site.

The protein belongs to the shikimate dehydrogenase family. In terms of assembly, homodimer.

It carries out the reaction L-quinate + NAD(+) = 3-dehydroquinate + NADH + H(+). The catalysed reaction is shikimate + NAD(+) = 3-dehydroshikimate + NADH + H(+). Its pathway is metabolic intermediate biosynthesis; chorismate biosynthesis; chorismate from D-erythrose 4-phosphate and phosphoenolpyruvate: step 4/7. The protein operates within aromatic compound metabolism; 3,4-dihydroxybenzoate biosynthesis; 3-dehydroquinate from D-quinate (NAD(+) route). Its function is as follows. Involved in the biosynthesis of the chorismate, which leads to the biosynthesis of aromatic amino acids, and plays a key role in the quinate degradation pathway. Catalyzes the NAD(+)-dependent oxidation of both quinate and shikimate to 3-dehydroquinate and 3-dehydroshikimate, respectively. It can only use NAD. This chain is Quinate/shikimate dehydrogenase (NAD(+)), found in Corynebacterium efficiens (strain DSM 44549 / YS-314 / AJ 12310 / JCM 11189 / NBRC 100395).